The sequence spans 377 residues: Glutamate 5-kinase (377 aa).

K20 is an ATP binding site. S60, D147, and N159 together coordinate substrate. Residue 179 to 180 participates in ATP binding; it reads TD. The region spanning 285 to 363 is the PUA domain; that stretch reads AGRLVIDDGA…DKVYQVLGEA (79 aa).

Belongs to the glutamate 5-kinase family.

Its subcellular location is the cytoplasm. The enzyme catalyses L-glutamate + ATP = L-glutamyl 5-phosphate + ADP. It participates in amino-acid biosynthesis; L-proline biosynthesis; L-glutamate 5-semialdehyde from L-glutamate: step 1/2. Functionally, catalyzes the transfer of a phosphate group to glutamate to form L-glutamate 5-phosphate. This Acinetobacter baumannii (strain SDF) protein is Glutamate 5-kinase.